The chain runs to 197 residues: Na(+)-translocating NADH-quinone reductase subunit E (197 aa).

6 consecutive transmembrane segments (helical) span residues 11–31, 35–55, 76–96, 108–128, 139–159, and 175–195; these read SVFI…FLAV, VSTA…SVPA, FLKF…LEMF, LGIY…VSFM, VVYG…LAGI, and LGIT…FSGI.

Belongs to the NqrDE/RnfAE family. In terms of assembly, composed of six subunits; NqrA, NqrB, NqrC, NqrD, NqrE and NqrF.

The protein localises to the cell inner membrane. The enzyme catalyses a ubiquinone + n Na(+)(in) + NADH + H(+) = a ubiquinol + n Na(+)(out) + NAD(+). Its function is as follows. NQR complex catalyzes the reduction of ubiquinone-1 to ubiquinol by two successive reactions, coupled with the transport of Na(+) ions from the cytoplasm to the periplasm. NqrA to NqrE are probably involved in the second step, the conversion of ubisemiquinone to ubiquinol. The sequence is that of Na(+)-translocating NADH-quinone reductase subunit E from Neisseria gonorrhoeae (strain ATCC 700825 / FA 1090).